A 144-amino-acid chain; its full sequence is Austinoid biosynthesis clusters protein S (144 aa).

The protein belongs to the trt14 isomerase family. Homodimer.

It participates in secondary metabolite biosynthesis; terpenoid biosynthesis. Its function is as follows. Part of the gene cluster B that mediates the biosynthesis of the fungal meroterpenoid acetoxydehydroaustin. The first step of the pathway is the synthesis of 3,5-dimethylorsellinic acid by the polyketide synthase ausA. 3,5-dimethylorsellinic acid is then prenylated by the polyprenyl transferase ausN. Further epoxidation by the FAD-dependent monooxygenase ausM and cyclization by the probable terpene cyclase ausL lead to the formation of protoaustinoid A. Protoaustinoid A is then oxidized to spiro-lactone preaustinoid A3 by the combined action of the FAD-binding monooxygenases ausB and ausC, and the dioxygenase ausE. Acid-catalyzed keto-rearrangement and ring contraction of the tetraketide portion of preaustinoid A3 by ausJ lead to the formation of preaustinoid A4. The aldo-keto reductase ausK, with the help of ausH, is involved in the next step by transforming preaustinoid A4 into isoaustinone which is in turn hydroxylated by the P450 monooxygenase ausI to form austinolide. The cytochrome P450 monooxygenase ausG then modifies austinolide to austinol. Austinol is further acetylated to austin by the O-acetyltransferase ausP, which spontaneously changes to dehydroaustin. The cytochrome P450 monooxygenase then converts dehydroaustin is into 7-dehydrodehydroaustin. The hydroxylation catalyzed by ausR permits the second O-acetyltransferase ausQ to add an additional acetyl group to the molecule, leading to the formation of acetoxydehydroaustin. Due to genetic rearrangements of the clusters and the subsequent loss of some enzymes, the end product of the Penicillium brasilianum austinoid biosynthesis clusters is acetoxydehydroaustin. AusS is necessary for austinoids production and may play a possible function as a regulator. The protein is Austinoid biosynthesis clusters protein S of Penicillium brasilianum.